The sequence spans 1173 residues: Protein GIGANTEA (1173 aa).

3 disordered regions span residues 150 to 187, 604 to 641, and 840 to 863; these read EQQNGDTERNCLSKATTSGSPTSEPKAGSPTQHERKPL, SGSKRPRSEYASTTENIEANQPVSNNQTANRKSRNVKG, and SRTEMNPRGNHKYARHSDEGSGRP. Polar residues-rich tracts occupy residues 162–172 and 613–633; these read SKATTSGSPTS and YASTTENIEANQPVSNNQTAN. Basic and acidic residues predominate over residues 854 to 863; that stretch reads RHSDEGSGRP.

The protein belongs to the GIGANTEA family. In terms of assembly, interacts with SPY. Interacts with ADO1 (via N-terminus) and ADO2. Interacts with ADO3 (via N-terminus). Interacts (via N-terminus) with CDF1. Interacts (via N-terminus) with TCP4. Widely expressed with highest levels in inflorescence apices, young flowers and young siliques.

It localises to the nucleus. The protein resides in the cytoplasm. Involved in regulation of circadian rhythm and photoperiodic flowering. May play a role in maintenance of circadian amplitude and period length. Is involved in phytochrome B signaling. Stabilizes ADO3 and the circadian photoreceptor ADO1/ZTL. Regulates 'CONSTANS' (CO) in the long-day flowering pathway by modulating the ADO3-dependent protein stability of CDF1 and CDF2, but is not essential to activate CO transcription. Regulates, via the microRNA miR172, a CO-independent pathway that promotes photoperiodic flowering by inducing 'FLOWERING LOCUS T'. This is Protein GIGANTEA (GI) from Arabidopsis thaliana (Mouse-ear cress).